The chain runs to 130 residues: Small ribosomal subunit protein uS8 (130 aa).

Belongs to the universal ribosomal protein uS8 family. Part of the 30S ribosomal subunit. Contacts proteins S5 and S12.

Its function is as follows. One of the primary rRNA binding proteins, it binds directly to 16S rRNA central domain where it helps coordinate assembly of the platform of the 30S subunit. The protein is Small ribosomal subunit protein uS8 of Neisseria meningitidis serogroup C (strain 053442).